The primary structure comprises 147 residues: Nucleoside diphosphate kinase (147 aa).

ATP contacts are provided by Lys9, Phe57, Arg85, Thr91, Arg102, and Asn112. Residue His115 is the Pros-phosphohistidine intermediate of the active site.

This sequence belongs to the NDK family. In terms of assembly, homotetramer. It depends on Mg(2+) as a cofactor.

Its subcellular location is the cytoplasm. It catalyses the reaction a 2'-deoxyribonucleoside 5'-diphosphate + ATP = a 2'-deoxyribonucleoside 5'-triphosphate + ADP. It carries out the reaction a ribonucleoside 5'-diphosphate + ATP = a ribonucleoside 5'-triphosphate + ADP. Major role in the synthesis of nucleoside triphosphates other than ATP. The ATP gamma phosphate is transferred to the NDP beta phosphate via a ping-pong mechanism, using a phosphorylated active-site intermediate. The polypeptide is Nucleoside diphosphate kinase (Fervidobacterium nodosum (strain ATCC 35602 / DSM 5306 / Rt17-B1)).